A 198-amino-acid polypeptide reads, in one-letter code: Recombination protein RecR (198 aa).

The C4-type zinc-finger motif lies at 57 to 72 (CAMCNTFTEHEVCETC). The Toprim domain maps to 80 to 175 (ALLCVVETPG…KVSRLARGVP (96 aa)).

This sequence belongs to the RecR family.

Its function is as follows. May play a role in DNA repair. It seems to be involved in an RecBC-independent recombinational process of DNA repair. It may act with RecF and RecO. The protein is Recombination protein RecR of Janthinobacterium sp. (strain Marseille) (Minibacterium massiliensis).